The following is a 201-amino-acid chain: Small ribosomal subunit protein uS4 (201 aa).

Residues K28–Y47 are disordered. The region spanning G92–L155 is the S4 RNA-binding domain.

This sequence belongs to the universal ribosomal protein uS4 family. Part of the 30S ribosomal subunit. Contacts protein S5. The interaction surface between S4 and S5 is involved in control of translational fidelity.

One of the primary rRNA binding proteins, it binds directly to 16S rRNA where it nucleates assembly of the body of the 30S subunit. In terms of biological role, with S5 and S12 plays an important role in translational accuracy. The protein is Small ribosomal subunit protein uS4 of Bacteroides fragilis (strain YCH46).